A 588-amino-acid chain; its full sequence is Dual specificity tyrosine-phosphorylation-regulated kinase 3 (588 aa).

The tract at residues 1-188 is disordered; sequence MGGTARGPGR…HGVIGGPNNG (188 aa). A compositionally biased stretch (polar residues) spans 97 to 134; the sequence is SNTIQSDGISDSEKCSPTVSQGKSSDCLNTVKSNSSSK. Residues 209-522 enclose the Protein kinase domain; sequence YEVLKIIGKG…PAQALRHPWI (314 aa). Residues 215–223, Lys238, and 288–291 contribute to the ATP site; these read IGKGSFGQV and FELL. Residue Asp335 is the Proton acceptor of the active site. Position 350 is a phosphoserine (Ser350). The residue at position 369 (Tyr369) is a Phosphotyrosine. Positions 468-481 match the Nuclear localization signal motif; it reads RSRRGKKRGPPGSK.

This sequence belongs to the protein kinase superfamily. CMGC Ser/Thr protein kinase family. MNB/DYRK subfamily. Interacts with SIRT1. The cofactor is Mg(2+). Post-translationally, ubiquitinated at anaphase by the anaphase-promoting complex (APC/C), leading to its degradation by the proteasome. Protein kinase activity is activated following autophosphorylation at Tyr-369. Autophosphorylation at Ser-350 stabilizes the protein and enhances the protein kinase activity. As to expression, isoform 1: Highly expressed in testis and in hematopoietic tissue such as fetal liver, and bone marrow. Isoform 1: Predominant form in fetal liver and bone marrow. Isoform 1: Present at low levels in heart, pancreas, lymph node and thymus. Isoform 2: Highly expressed in testis and in hematopoietic tissue such as fetal liver, and bone marrow. Isoform 2: Predominant form in testis. Isoform 2: Present at low levels in heart, pancreas, lymph node and thymus.

The protein localises to the nucleus. It localises to the cytoplasm. The protein resides in the nucleus speckle. Its subcellular location is the cytoplasmic granule. It is found in the cytoskeleton. The protein localises to the microtubule organizing center. It localises to the centrosome. The catalysed reaction is L-seryl-[protein] + ATP = O-phospho-L-seryl-[protein] + ADP + H(+). The enzyme catalyses L-threonyl-[protein] + ATP = O-phospho-L-threonyl-[protein] + ADP + H(+). It carries out the reaction L-tyrosyl-[protein] + ATP = O-phospho-L-tyrosyl-[protein] + ADP + H(+). Its activity is regulated as follows. Protein kinase activity is activated following autophosphorylation at Tyr-369. Inhibited by harmine, an ATP competitive inhibitor. Inhibited by small-compound GSK-626616. Dual-specificity protein kinase that promotes disassembly of several types of membraneless organelles during mitosis, such as stress granules, nuclear speckles and pericentriolar material. Dual-specificity tyrosine-regulated kinases (DYRKs) autophosphorylate a critical tyrosine residue in their activation loop and phosphorylate their substrate on serine and threonine residues. Acts as a central dissolvase of membraneless organelles during the G2-to-M transition, after the nuclear-envelope breakdown: acts by mediating phosphorylation of multiple serine and threonine residues in unstructured domains of proteins, such as SRRM1 and PCM1. Does not mediate disassembly of all membraneless organelles: disassembly of P-body and nucleolus is not regulated by DYRK3. Dissolution of membraneless organelles at the onset of mitosis is also required to release mitotic regulators, such as ZNF207, from liquid-unmixed organelles where they are sequestered and keep them dissolved during mitosis. Regulates mTORC1 by mediating the dissolution of stress granules: during stressful conditions, DYRK3 partitions from the cytosol to the stress granule, together with mTORC1 components, which prevents mTORC1 signaling. When stress signals are gone, the kinase activity of DYRK3 is required for the dissolution of stress granule and mTORC1 relocation to the cytosol: acts by mediating the phosphorylation of the mTORC1 inhibitor AKT1S1, allowing full reactivation of mTORC1 signaling. Also acts as a negative regulator of EPO-dependent erythropoiesis: may place an upper limit on red cell production during stress erythropoiesis. Inhibits cell death due to cytokine withdrawal in hematopoietic progenitor cells. Promotes cell survival upon genotoxic stress through phosphorylation of SIRT1: this in turn inhibits p53/TP53 activity and apoptosis. In Homo sapiens (Human), this protein is Dual specificity tyrosine-phosphorylation-regulated kinase 3.